The following is a 417-amino-acid chain: Probable glucuronosyltransferase GUT1 (417 aa).

Topologically, residues 1–15 are cytoplasmic; sequence MGTRRRSARARARPP. Residues 16–36 form a helical; Signal-anchor for type II membrane protein membrane-spanning segment; the sequence is LAMPLAVLLLFACSSGVAAAA. The Lumenal portion of the chain corresponds to 37-417; that stretch reads AQGIERIKDD…EGTREDLKPW (381 aa). N144 and N405 each carry an N-linked (GlcNAc...) asparagine glycan.

It belongs to the glycosyltransferase 47 family.

The protein localises to the golgi apparatus membrane. Its function is as follows. Involved in the synthesis of glucuronoxylan hemicellulose in secondary cell walls. The sequence is that of Probable glucuronosyltransferase GUT1 (GUT1) from Oryza sativa subsp. japonica (Rice).